A 342-amino-acid polypeptide reads, in one-letter code: 4-hydroxy-2-oxovalerate aldolase (342 aa).

Positions 7–257 constitute a Pyruvate carboxyltransferase domain; sequence VWITEVALRD…KTGIDLYKMM (251 aa). 15–16 serves as a coordination point for substrate; sequence RD. A Mn(2+)-binding site is contributed by Asp-16. The active-site Proton acceptor is the His-19. The substrate site is built by Ser-169 and His-196. The Mn(2+) site is built by His-196 and His-198. Tyr-287 is a binding site for substrate.

Belongs to the 4-hydroxy-2-oxovalerate aldolase family.

The enzyme catalyses (S)-4-hydroxy-2-oxopentanoate = acetaldehyde + pyruvate. The protein is 4-hydroxy-2-oxovalerate aldolase (pheE) of Geobacillus stearothermophilus (Bacillus stearothermophilus).